The chain runs to 29 residues: Dermaseptin-J6 (29 aa).

Position 29 is a valine amide (valine 29).

Expressed by the skin glands.

It localises to the secreted. Its function is as follows. Has antimicrobial activity. This chain is Dermaseptin-J6, found in Phasmahyla jandaia (Jandaia leaf frog).